The sequence spans 98 residues: NADH-quinone oxidoreductase subunit K (98 aa).

3 helical membrane-spanning segments follow: residues 1–21 (MGHL…GIFL), 27–47 (IVLL…FIAF), and 59–79 (FVFF…AILV).

The protein belongs to the complex I subunit 4L family. NDH-1 is composed of 14 different subunits. Subunits NuoA, H, J, K, L, M, N constitute the membrane sector of the complex.

The protein localises to the cell inner membrane. It catalyses the reaction a quinone + NADH + 5 H(+)(in) = a quinol + NAD(+) + 4 H(+)(out). Functionally, NDH-1 shuttles electrons from NADH, via FMN and iron-sulfur (Fe-S) centers, to quinones in the respiratory chain. The immediate electron acceptor for the enzyme in this species is believed to be ubiquinone. Couples the redox reaction to proton translocation (for every two electrons transferred, four hydrogen ions are translocated across the cytoplasmic membrane), and thus conserves the redox energy in a proton gradient. The polypeptide is NADH-quinone oxidoreductase subunit K (Xanthomonas oryzae pv. oryzae (strain PXO99A)).